Here is a 292-residue protein sequence, read N- to C-terminus: Seed lectin (292 aa).

The signal sequence occupies residues 1–37 (MATSNSRPHLLQTHKPFSVVLAISITFFLLLLNKVNS). Asparagine 82 and asparagine 154 each carry an N-linked (GlcNAc...) asparagine glycan. Positions 163 and 165 each coordinate Mn(2+). Ca(2+) contacts are provided by aspartate 165, histidine 167, asparagine 169, and aspartate 172. The Mn(2+) site is built by aspartate 172 and histidine 177. Asparagine 186 is a glycosylation site (N-linked (GlcNAc...) asparagine).

This sequence belongs to the leguminous lectin family.

Mannose/glucose-specific lectin. This chain is Seed lectin, found in Styphnolobium japonicum (Japanese pagoda tree).